We begin with the raw amino-acid sequence, 213 residues long: uncharacterized protein (213 aa).

Active-site charge relay system residues include serine 114, aspartate 162, and histidine 194.

The protein belongs to the AB hydrolase superfamily. AB hydrolase 2 family.

This is an uncharacterized protein from Rickettsia bellii (strain RML369-C).